The primary structure comprises 338 residues: Galaxin (338 aa).

An N-terminal signal peptide occupies residues 1-23 (MKPSGAFLSLCVVLLSLATHCFS). Over residues 30 to 47 (RRDAHSDTNALKSRDRRQ) the composition is skewed to basic and acidic residues. Residues 30–50 (RRDAHSDTNALKSRDRRQAPA) form a disordered region.

In terms of tissue distribution, component of the acid-insoluble organic matrix of the aragonitic skeleton (at protein level). Initially, expressed in an aboral submarginal ring and then along calcifying septa.

The protein resides in the secreted. This Acropora millepora (Staghorn coral) protein is Galaxin.